The following is an 854-amino-acid chain: pH-response regulator protein palA/prr-1 (854 aa).

One can recognise a BRO1 domain in the interval 5 to 402 (HVLSLPFRKS…SELESMTSQL (398 aa)). Positions 632–699 (RLDRLYESEL…DAAYYKYKEI (68 aa)) form a coiled coil. 2 disordered regions span residues 739 to 782 (EEEI…EPIQ) and 801 to 854 (PQQQ…IRFG). Residues 746–759 (PLSSLNMHQSSFSY) show a composition bias toward polar residues. Residues 767-782 (QPPPPPPQIPFPEPIQ) show a composition bias toward pro residues. Residues 827-839 (QGQQHQQEQGQPG) show a composition bias toward low complexity.

Belongs to the palA/RIM20 family. In terms of assembly, interacts with pacc-1 by binding to its two YPX[LI] motifs.

Required for the proteolytic cleavage of the transcription factor pacc-1 in response to alkaline ambient pH. May act as a scaffold protein that recruits the calpain-like protease palB/cpr-8 via snf7/vps-3 to its substrate pacc-1. This Neurospora crassa (strain ATCC 24698 / 74-OR23-1A / CBS 708.71 / DSM 1257 / FGSC 987) protein is pH-response regulator protein palA/prr-1 (prr-1).